The sequence spans 101 residues: Acylphosphatase-1 (101 aa).

The residue at position 2 (serine 2) is an N-acetylserine. An N-acetylalanine modification is found at serine 2. The Acylphosphatase-like domain occupies serine 11–lysine 101. Active-site residues include arginine 26 and asparagine 44.

It belongs to the acylphosphatase family. Organ-common type isozyme is found in many different tissues.

The enzyme catalyses an acyl phosphate + H2O = a carboxylate + phosphate + H(+). The sequence is that of Acylphosphatase-1 (ACYP1) from Sus scrofa (Pig).